We begin with the raw amino-acid sequence, 160 residues long: Seed allergenic protein RA5 (160 aa).

An N-terminal signal peptide occupies residues 1–26; the sequence is MASNKVVFSVLLLAVVSVLAATATMA. Cystine bridges form between Cys-42-Cys-92, Cys-56-Cys-80, Cys-64-Cys-124, Cys-81-Cys-140, and Cys-94-Cys-152.

Belongs to the protease inhibitor I6 (cereal trypsin/alpha-amylase inhibitor) family. Post-translationally, five disulfide bonds are present.

Its subcellular location is the secreted. Its function is as follows. Seed storage protein. The chain is Seed allergenic protein RA5 (RA5) from Oryza sativa subsp. japonica (Rice).